We begin with the raw amino-acid sequence, 843 residues long: Protein P (843 aa).

The interval 1 to 177 is terminal protein domain (TP); the sequence is MPLSYQHFRK…FCGSPYSWEQ (177 aa). Residues 178-346 are spacer; it reads DLQHGRLVFQ…YCLCHIVNLI (169 aa). Disordered regions lie at residues 220–269 and 291–316; these read KSRL…HNCA and TSKG…RSRS. The polymerase/reverse transcriptase domain (RT) stretch occupies residues 347-690; it reads EDWGPCTEHG…YLNLYPVARQ (344 aa). One can recognise a Reverse transcriptase domain in the interval 357–600; the sequence is EHRIRTPRTP…YSLNFMGYVI (244 aa). Residues D429, D551, and D552 each coordinate Mg(2+).

Belongs to the hepadnaviridae P protein family.

The enzyme catalyses DNA(n) + a 2'-deoxyribonucleoside 5'-triphosphate = DNA(n+1) + diphosphate. The catalysed reaction is Endonucleolytic cleavage to 5'-phosphomonoester.. With respect to regulation, activated by host HSP70 and HSP40 in vitro to be able to bind the epsilon loop of the pgRNA. Because deletion of the RNase H region renders the protein partly chaperone-independent, the chaperones may be needed indirectly to relieve occlusion of the RNA-binding site by this domain. Inhibited by several reverse-transcriptase inhibitors: Lamivudine, Adefovir and Entecavir. In terms of biological role, multifunctional enzyme that converts the viral RNA genome into dsDNA in viral cytoplasmic capsids. This enzyme displays a DNA polymerase activity that can copy either DNA or RNA templates, and a ribonuclease H (RNase H) activity that cleaves the RNA strand of RNA-DNA heteroduplexes in a partially processive 3'- to 5'-endonucleasic mode. Neo-synthesized pregenomic RNA (pgRNA) are encapsidated together with the P protein, and reverse-transcribed inside the nucleocapsid. Initiation of reverse-transcription occurs first by binding the epsilon loop on the pgRNA genome, and is initiated by protein priming, thereby the 5'-end of (-)DNA is covalently linked to P protein. Partial (+)DNA is synthesized from the (-)DNA template and generates the relaxed circular DNA (RC-DNA) genome. After budding and infection, the RC-DNA migrates in the nucleus, and is converted into a plasmid-like covalently closed circular DNA (cccDNA). The activity of P protein does not seem to be necessary for cccDNA generation, and is presumably released from (+)DNA by host nuclear DNA repair machinery. In Homo sapiens (Human), this protein is Protein P.